The sequence spans 224 residues: Transcriptional regulatory protein TctD (224 aa).

The region spanning 2 to 116 (RLLLAEDNRE…ELDARLRALL (115 aa)) is the Response regulatory domain. Asp51 is subject to 4-aspartylphosphate. The ompR/PhoB-type DNA-binding region spans 121–219 (GQVHEVQQLG…LRGLGYVLER (99 aa)).

Its function is as follows. Transcriptional activator of the tctI tricarboxylate transport system operon. The sequence is that of Transcriptional regulatory protein TctD (tctD) from Salmonella typhimurium (strain SL1344).